Here is a 540-residue protein sequence, read N- to C-terminus: Kinesin light chain (540 aa).

Residues 34 to 138 (LETSVKGVKE…NKHLKYMASI (105 aa)) adopt a coiled-coil conformation. TPR repeat units follow at residues 206–239 (LRTL…LEKT), 248–281 (ATML…REKC), 290–323 (AATL…REKV), 332–365 (AKQL…YESK), 374–407 (AKTK…AHER), and 456–489 (TTTL…KKQH).

The protein belongs to the kinesin light chain family. As to quaternary structure, oligomeric complex composed of two heavy chains and two light chains. Interacts with unc-83; the interaction is direct. Interacts with unc-33; the interaction regulates unc-33 neurite localization. Interacts with casy-1.

The protein localises to the cytoplasm. Its subcellular location is the cytoskeleton. It localises to the nucleus envelope. Its function is as follows. Kinesin is a microtubule-associated force-producing protein that may play a role in organelle transport. The light chain may function in coupling of cargo to the heavy chain or in the modulation of its ATPase activity. Recruits unc-83 (within the unc-83-unc-84 LINC complex) to the nuclear envelope during nuclear migration to mediate the link between the nuclear envelope and the microtubule cytoskeleton in hypodermal precursor cells. In Caenorhabditis elegans, this protein is Kinesin light chain.